Consider the following 241-residue polypeptide: Prolactin-8A8 (241 aa).

A signal peptide spans 1 to 30 (MELQFRQPHFSDALLLLLLSNLLLWEKASS). 3 disulfides stabilise this stretch: cysteine 34/cysteine 41, cysteine 101/cysteine 217, and cysteine 234/cysteine 241. N-linked (GlcNAc...) asparagine glycosylation occurs at asparagine 213.

Belongs to the somatotropin/prolactin family. Expressed specifically in the placenta. Predominantly expressed in spongiotrophoblast cells.

Its subcellular location is the secreted. The chain is Prolactin-8A8 (Prl8a8) from Mus musculus (Mouse).